The following is a 358-amino-acid chain: Plastoglobulin-1, chloroplastic (358 aa).

The N-terminal 47 residues, methionine 1–alanine 47, are a transit peptide targeting the chloroplast. The interval alanine 48 to phenylalanine 114 is disordered.

Belongs to the PAP/fibrillin family.

Its subcellular location is the plastid. It localises to the chloroplast. In terms of biological role, may form together with other plastoglobulins a coat on the surface of the lipoprotein particle. The coat may contain receptors for attachment to the thylakoid membrane as well as regulatory proteins that may function in the transfer of lipids to and from the thylakoid membranes. The polypeptide is Plastoglobulin-1, chloroplastic (PG1) (Pisum sativum (Garden pea)).